Here is a 1026-residue protein sequence, read N- to C-terminus: RecBCD enzyme subunit RecB (1026 aa).

A UvrD-like helicase ATP-binding domain is found at 1–438 (MSSFDIFSPT…LILDTNYRST (438 aa)). The interval 1–766 (MSSFDIFSPT…LANYANITQH (766 aa)) is DNA-binding and helicase activity, interacts with RecC. Residue 21-28 (ASAGTGKT) participates in ATP binding. Residues 452 to 700 (PSPFLETPQT…KITTVHSSKG (249 aa)) form the UvrD-like helicase C-terminal domain. Residues 815–1026 (SQPIYSFSST…KGNGFLQPSP (212 aa)) are nuclease activity, interacts with RecD and RecA. Histidine 854, aspartate 940, and aspartate 953 together coordinate Mg(2+). Aspartate 953 functions as the For nuclease activity in the catalytic mechanism.

This sequence belongs to the helicase family. UvrD subfamily. In terms of assembly, heterotrimer of RecB, RecC and RecD. All subunits contribute to DNA-binding. Interacts with RecA. It depends on Mg(2+) as a cofactor.

It carries out the reaction Exonucleolytic cleavage (in the presence of ATP) in either 5'- to 3'- or 3'- to 5'-direction to yield 5'-phosphooligonucleotides.. It catalyses the reaction Couples ATP hydrolysis with the unwinding of duplex DNA by translocating in the 3'-5' direction.. The catalysed reaction is ATP + H2O = ADP + phosphate + H(+). Functionally, a helicase/nuclease that prepares dsDNA breaks (DSB) for recombinational DNA repair. Binds to DSBs and unwinds DNA via a highly rapid and processive ATP-dependent bidirectional helicase activity. Unwinds dsDNA until it encounters a Chi (crossover hotspot instigator) sequence from the 3' direction. Cuts ssDNA a few nucleotides 3' to the Chi site. The properties and activities of the enzyme are changed at Chi. The Chi-altered holoenzyme produces a long 3'-ssDNA overhang and facilitates RecA-binding to the ssDNA for homologous DNA recombination and repair. Holoenzyme degrades any linearized DNA that is unable to undergo homologous recombination. In the holoenzyme this subunit contributes ATPase, 3'-5' helicase, exonuclease activity and loads RecA onto ssDNA. This is RecBCD enzyme subunit RecB from Chlamydia muridarum (strain MoPn / Nigg).